Consider the following 165-residue polypeptide: MSNTDAQTSFASLVVGPPVTDPINPLMGATSISPNLIELHGRKALVFAFGNLAVRAEGDFVLRYRVADILAGTGIDGVFPIQAICYGGPFHVFSTKDFPGYEASTELTKTLSVWGAQVNVREHRRRRRGKKDAAPAVTKPLYTTAPLDRDIVADSERRRRRRAGY.

The Velvet domain occupies 1-121 (MSNTDAQTSF…SVWGAQVNVR (121 aa)).

The protein belongs to the velvet family.

Its subcellular location is the nucleus. Its function is as follows. Velvet-domain-containing protein that probably acts as a positive regulator of sexual development. The sequence is that of Probable velvet family sexual development regulator CC1G_12219 from Coprinopsis cinerea (strain Okayama-7 / 130 / ATCC MYA-4618 / FGSC 9003) (Inky cap fungus).